Here is a 91-residue protein sequence, read N- to C-terminus: Small ribosomal subunit protein bS20 (91 aa).

The protein belongs to the bacterial ribosomal protein bS20 family.

Its function is as follows. Binds directly to 16S ribosomal RNA. The protein is Small ribosomal subunit protein bS20 of Mycoplasma mobile (strain ATCC 43663 / 163K / NCTC 11711) (Mesomycoplasma mobile).